A 722-amino-acid polypeptide reads, in one-letter code: Polyribonucleotide nucleotidyltransferase (722 aa).

The Mg(2+) site is built by aspartate 495 and aspartate 501. The 60-residue stretch at 562–621 (PRLLSFRIDPELIGTVIGPGGRTIKGITERTNTKIDIEDGGIVTIASHDGAAAEEAQRII) folds into the KH domain. Residues 631 to 699 (GEIFPGSITR…NRGRINLTLR (69 aa)) form the S1 motif domain. The segment at 700-722 (GVSQNGGMSNYPEPTPTPVAPLT) is disordered. The span at 712–722 (EPTPTPVAPLT) shows a compositional bias: pro residues.

Belongs to the polyribonucleotide nucleotidyltransferase family. It depends on Mg(2+) as a cofactor.

The protein localises to the cytoplasm. It carries out the reaction RNA(n+1) + phosphate = RNA(n) + a ribonucleoside 5'-diphosphate. In terms of biological role, involved in mRNA degradation. Catalyzes the phosphorolysis of single-stranded polyribonucleotides processively in the 3'- to 5'-direction. This is Polyribonucleotide nucleotidyltransferase from Prochlorococcus marinus (strain NATL1A).